Here is a 239-residue protein sequence, read N- to C-terminus: U2 small nuclear ribonucleoprotein A' (239 aa).

LRR repeat units follow at residues 19 to 40, 42 to 63, 64 to 85, and 88 to 109; these read KETELDLRWYQIPIIENLGVLR, VHDAIDFTDNDIRYLGNFPRMK, RLQTLLCGNNRITAIAPDIGKV, and NLKTLSLAQNHLQEIADLDPLA. The LRRCT domain occupies 122-160; sequence NPVAQKQYYRLYLIWRIPSLHILDFERVRRNERLRAEEV.

The protein belongs to the U2 small nuclear ribonucleoprotein A family. In terms of assembly, belongs to the 40S cdc5-associated complex (or cwf complex), a spliceosome sub-complex reminiscent of a late-stage spliceosome composed of the U2, U5 and U6 snRNAs and at least brr2, cdc5, cwf2/prp3, cwf3/syf1, cwf4/syf3, cwf5/ecm2, spp42/cwf6, cwf7/spf27, cwf8, cwf9, cwf10, cwf11, cwf12, prp45/cwf13, cwf14, cwf15, cwf16, cwf17, cwf18, cwf19, cwf20, cwf21, cwf22, cwf23, cwf24, cwf25, cwf26, cyp7/cwf27, cwf28, cwf29/ist3, lea1, msl1, prp5/cwf1, prp10, prp12/sap130, prp17, prp22, sap61, sap62, sap114, sap145, slu7, smb1, smd1, smd3, smf1, smg1 and syf2.

Its subcellular location is the nucleus. Functionally, involved in pre-mRNA splicing. This protein is associated with sn-RNP U2. It helps the A' protein to bind stem loop IV of U2 snRNA. This Schizosaccharomyces pombe (strain 972 / ATCC 24843) (Fission yeast) protein is U2 small nuclear ribonucleoprotein A' (lea1).